The chain runs to 160 residues: SsrA-binding protein (160 aa).

Positions 133–160 (KKLHDKRETEKERDWNRQKSRLLKGNSQ) are disordered. Positions 137-149 (DKRETEKERDWNR) are enriched in basic and acidic residues.

It belongs to the SmpB family.

The protein localises to the cytoplasm. Its function is as follows. Required for rescue of stalled ribosomes mediated by trans-translation. Binds to transfer-messenger RNA (tmRNA), required for stable association of tmRNA with ribosomes. tmRNA and SmpB together mimic tRNA shape, replacing the anticodon stem-loop with SmpB. tmRNA is encoded by the ssrA gene; the 2 termini fold to resemble tRNA(Ala) and it encodes a 'tag peptide', a short internal open reading frame. During trans-translation Ala-aminoacylated tmRNA acts like a tRNA, entering the A-site of stalled ribosomes, displacing the stalled mRNA. The ribosome then switches to translate the ORF on the tmRNA; the nascent peptide is terminated with the 'tag peptide' encoded by the tmRNA and targeted for degradation. The ribosome is freed to recommence translation, which seems to be the essential function of trans-translation. This Agrobacterium fabrum (strain C58 / ATCC 33970) (Agrobacterium tumefaciens (strain C58)) protein is SsrA-binding protein.